Consider the following 88-residue polypeptide: MATKIRLARAGAKKKPFYQIIVADVRSRRDGRFIENVGTYDPNQNPAAVKFEEAKTLEWLGKGAQPTDTVKQILKKAGIWEKFVAKSV.

The protein belongs to the bacterial ribosomal protein bS16 family.

The polypeptide is Small ribosomal subunit protein bS16 (Geobacter sulfurreducens (strain ATCC 51573 / DSM 12127 / PCA)).